The chain runs to 141 residues: Large ribosomal subunit protein uL13 (141 aa).

This sequence belongs to the universal ribosomal protein uL13 family. As to quaternary structure, part of the 50S ribosomal subunit.

Its function is as follows. This protein is one of the early assembly proteins of the 50S ribosomal subunit, although it is not seen to bind rRNA by itself. It is important during the early stages of 50S assembly. This Helicobacter pylori (strain Shi470) protein is Large ribosomal subunit protein uL13.